Reading from the N-terminus, the 368-residue chain is tRNA/tmRNA (uracil-C(5))-methyltransferase (368 aa).

Residues Gln-192, Tyr-220, Asn-225, Glu-241, and Asp-301 each contribute to the S-adenosyl-L-methionine site. Cys-326 serves as the catalytic Nucleophile. The Proton acceptor role is filled by Glu-360.

This sequence belongs to the class I-like SAM-binding methyltransferase superfamily. RNA M5U methyltransferase family. TrmA subfamily.

It catalyses the reaction uridine(54) in tRNA + S-adenosyl-L-methionine = 5-methyluridine(54) in tRNA + S-adenosyl-L-homocysteine + H(+). The catalysed reaction is uridine(341) in tmRNA + S-adenosyl-L-methionine = 5-methyluridine(341) in tmRNA + S-adenosyl-L-homocysteine + H(+). In terms of biological role, dual-specificity methyltransferase that catalyzes the formation of 5-methyluridine at position 54 (m5U54) in all tRNAs, and that of position 341 (m5U341) in tmRNA (transfer-mRNA). This is tRNA/tmRNA (uracil-C(5))-methyltransferase from Actinobacillus pleuropneumoniae serotype 7 (strain AP76).